A 429-amino-acid polypeptide reads, in one-letter code: Enolase (429 aa).

Gln168 contributes to the (2R)-2-phosphoglycerate binding site. Glu210 acts as the Proton donor in catalysis. Mg(2+)-binding residues include Asp247, Glu288, and Asp315. 4 residues coordinate (2R)-2-phosphoglycerate: Lys340, Arg369, Ser370, and Lys391. The active-site Proton acceptor is the Lys340.

Belongs to the enolase family. Mg(2+) is required as a cofactor.

The protein localises to the cytoplasm. It localises to the secreted. Its subcellular location is the cell surface. The enzyme catalyses (2R)-2-phosphoglycerate = phosphoenolpyruvate + H2O. It participates in carbohydrate degradation; glycolysis; pyruvate from D-glyceraldehyde 3-phosphate: step 4/5. In terms of biological role, catalyzes the reversible conversion of 2-phosphoglycerate (2-PG) into phosphoenolpyruvate (PEP). It is essential for the degradation of carbohydrates via glycolysis. This Nostoc punctiforme (strain ATCC 29133 / PCC 73102) protein is Enolase.